Consider the following 417-residue polypeptide: Serine/threonine-protein phosphatase 4 regulatory subunit 2 (417 aa).

Composition is skewed to polar residues over residues 140-149 (EKNNSSSLNR), 158-170 (NSPSYTERSNING), and 186-196 (APMTTNGLPES). The tract at residues 140–417 (EKNNSSSLNR…EVTDEPMEQD (278 aa)) is disordered. Phosphoserine is present on S159. The segment covering 197-213 (TDSKEANLQQNEEKSHS) has biased composition (basic and acidic residues). Low complexity predominate over residues 214 to 226 (DSSTSESEVSSVS). S226 is subject to Phosphoserine. A compositionally biased stretch (basic and acidic residues) spans 231–258 (KHPDEDAVEAEGHEVKRLRFDKEGEVRE). Over residues 259 to 269 (TASQTTSSEIS) the composition is skewed to polar residues. A compositionally biased stretch (basic and acidic residues) spans 283–297 (QDKDKDSRCTRQHCT). Over residues 298-311 (EEDEEEDEEEEEES) the composition is skewed to acidic residues. The segment covering 318–327 (MIPERKNQEK) has biased composition (basic and acidic residues). Positions 338-350 (ETSEENNQMEESD) are enriched in acidic residues. A compositionally biased stretch (basic and acidic residues) spans 353-363 (QAEKDLLHSEG). The span at 385–399 (GSNSSKTGEILSESS) shows a compositional bias: polar residues. Over residues 400 to 417 (MENDDEATEVTDEPMEQD) the composition is skewed to acidic residues.

It belongs to the PPP4R2 family. In terms of assembly, serine/threonine-protein phosphatase 4 (PP4) occurs in different assemblies of the catalytic and one or more regulatory subunits. Component of the PP4 complexes PPP4C-PPP4R2, PPP4C-PPP4R2-PPP4R3A and PPP4C-PPP4R2-PPP4R3B. The PPP4C-PPP4R2 complex appears to be a tetramer composed of 2 molecules of PPP4C and 2 molecules of PPP4R2. Interacts with DDX20/GEMIN3 and GEMIN4. Interacts with RPA2; this DNA damage-dependent interaction recruits PPP4C leading to RPA2 dephosphorylation.

It localises to the cytoplasm. Its subcellular location is the cytoskeleton. The protein resides in the microtubule organizing center. It is found in the centrosome. The protein localises to the nucleus. In terms of biological role, regulatory subunit of serine/threonine-protein phosphatase 4 (PP4). May regulate the activity of PPP4C at centrosomal microtubule organizing centers. Its interaction with the SMN complex leads to enhance the temporal localization of snRNPs, suggesting a role of PPP4C in maturation of spliceosomal snRNPs. The PPP4C-PPP4R2-PPP4R3A PP4 complex specifically dephosphorylates H2AX phosphorylated on 'Ser-140' (gamma-H2AX) generated during DNA replication and required for DNA double strand break repair. Mediates RPA2 dephosphorylation by recruiting PPP4C to RPA2 in a DNA damage-dependent manner. RPA2 dephosphorylation is required for the efficient RPA2-mediated recruitment of RAD51 to chromatin following double strand breaks, an essential step for DNA repair. The polypeptide is Serine/threonine-protein phosphatase 4 regulatory subunit 2 (PPP4R2) (Pongo abelii (Sumatran orangutan)).